The primary structure comprises 547 residues: Chaperonin GroEL (547 aa).

ATP is bound by residues 30-33, Lys51, 87-91, Gly415, 479-481, and Asp495; these read TLGP, DGTTT, and DAA.

It belongs to the chaperonin (HSP60) family. As to quaternary structure, forms a cylinder of 14 subunits composed of two heptameric rings stacked back-to-back. Interacts with the co-chaperonin GroES.

The protein resides in the cytoplasm. The catalysed reaction is ATP + H2O + a folded polypeptide = ADP + phosphate + an unfolded polypeptide.. Its function is as follows. Together with its co-chaperonin GroES, plays an essential role in assisting protein folding. The GroEL-GroES system forms a nano-cage that allows encapsulation of the non-native substrate proteins and provides a physical environment optimized to promote and accelerate protein folding. This chain is Chaperonin GroEL, found in Dichelobacter nodosus (strain VCS1703A).